Reading from the N-terminus, the 677-residue chain is Protein hook (677 aa).

In terms of domain architecture, Calponin-homology (CH) spans 6 to 123; that stretch reads NEMYYSLLEW…RLLQLVLGCA (118 aa). Coiled-coil stretches lie at residues 135 to 436 and 478 to 588; these read EIMC…KCGH and QTAL…AKEV.

This sequence belongs to the hook family. As to quaternary structure, homodimer. Interacts with microtubules via its N-terminus.

Its subcellular location is the cytoplasm. It localises to the cytoskeleton. The protein localises to the endosome. The protein resides in the synapse. Involved in endocytic trafficking by stabilizing organelles of the endocytic pathway. Probably acts as a cytoskeletal linker protein required to tether endosome vesicles to the cytoskeleton. Involved in modulation of endocytosis at stages required for down-regulation of membrane proteins that control synapse size. Not involved in synaptic vesicle recycling. Required in R7 cells for boss endocytosis into multivesicular bodies (MVBs). Has a role in regulating adult longevity. The sequence is that of Protein hook from Drosophila pseudoobscura pseudoobscura (Fruit fly).